The primary structure comprises 78 residues: Small ribosomal subunit protein bS18 (78 aa).

Belongs to the bacterial ribosomal protein bS18 family. Part of the 30S ribosomal subunit. Forms a tight heterodimer with protein bS6.

In terms of biological role, binds as a heterodimer with protein bS6 to the central domain of the 16S rRNA, where it helps stabilize the platform of the 30S subunit. The chain is Small ribosomal subunit protein bS18 from Nocardioides sp. (strain ATCC BAA-499 / JS614).